Consider the following 112-residue polypeptide: UPF0212 protein Mboo_1659 (112 aa).

The protein belongs to the UPF0212 family.

The protein is UPF0212 protein Mboo_1659 of Methanoregula boonei (strain DSM 21154 / JCM 14090 / 6A8).